The following is a 576-amino-acid chain: Mitogen-activated protein kinase 15 (576 aa).

The segment at 20–50 is disordered; it reads RPSSSSSSNNHDQIQNPPTVSNPNDDEDLKK. The span at 28 to 42 shows a compositional bias: polar residues; sequence NNHDQIQNPPTVSNP. The Protein kinase domain occupies 90 to 381; sequence YQIQEVVGKG…AEEALADPYF (292 aa). Residues 96–104 and Lys119 each bind ATP; that span reads VGKGSYGVV. Residue Asp216 is the Proton acceptor of the active site. Residue Thr252 is modified to Phosphothreonine. Residues 252 to 254 carry the TXY motif; sequence TDY. Tyr254 is modified (phosphotyrosine). Thr257 carries the phosphothreonine modification. Positions 458-535 are disordered; that stretch reads EENQGPGGRS…GGGYSARNLM (78 aa). A compositionally biased stretch (basic and acidic residues) spans 477 to 501; sequence LPRERVPASKNETVEERSNDIERRT. Positions 504–520 are enriched in polar residues; the sequence is AVASTLDSPKASQQAEG.

This sequence belongs to the protein kinase superfamily. CMGC Ser/Thr protein kinase family. MAP kinase subfamily. In terms of assembly, interacts with MKK7. Post-translationally, dually phosphorylated on Thr-252 and Tyr-254, which activates the enzyme.

It carries out the reaction L-seryl-[protein] + ATP = O-phospho-L-seryl-[protein] + ADP + H(+). The catalysed reaction is L-threonyl-[protein] + ATP = O-phospho-L-threonyl-[protein] + ADP + H(+). Its activity is regulated as follows. Activated by threonine and tyrosine phosphorylation. In Arabidopsis thaliana (Mouse-ear cress), this protein is Mitogen-activated protein kinase 15 (MPK15).